Here is a 372-residue protein sequence, read N- to C-terminus: Ephrin type-A receptor 8 (372 aa).

In terms of domain architecture, Protein kinase spans 2-263; the sequence is IHIEKIIGSG…HVVSVLEALV (262 aa). ATP-binding positions include 8-16 and Lys34; that span reads IGSGESGEV. Asp127 serves as the catalytic Proton acceptor. Tyr206 carries the post-translational modification Phosphotyrosine; by autocatalysis. Residues 297–372 form the SAM domain; it reads NGDLTVGDWL…SCTQGPRRHL (76 aa). A PDZ-binding motif is present at residues 370–372; the sequence is RHL.

As to quaternary structure, heterotetramer upon binding of the ligand. The heterotetramer is composed of an ephrin dimer and a receptor dimer. Oligomerization is probably required to induce biological responses. May also form heterodimers with other ephrin receptors. Interacts with FYN; possible downstream effector of EPHA8 in regulation of cell adhesion. Interacts with PIK3CG; regulates integrin-mediated cell adhesion to substrate. Interacts with TIAM1; regulates clathrin-mediated endocytosis of EPHA8. Interacts with ANKS1A and ANKS1B; EPHA8 kinase activity-independent but stimulated by EPHA8 ubiquitination. In terms of processing, phosphorylated. Phosphorylation is stimulated upon binding of its ligands including EFNA2, EFNA3 and EFNA5. Autophosphorylation on Tyr-206 modulates tyrosine kinase activity. Ubiquitinated. Ubiquitination by CBL regulates the receptor stability and activity through proteasomal degradation. ANKS1A prevents ubiquitination and degradation. Most abundant in brain.

The protein localises to the cell membrane. The protein resides in the cell projection. It is found in the early endosome membrane. It carries out the reaction L-tyrosyl-[protein] + ATP = O-phospho-L-tyrosyl-[protein] + ADP + H(+). In terms of biological role, receptor tyrosine kinase which binds promiscuously GPI-anchored ephrin-A family ligands residing on adjacent cells, leading to contact-dependent bidirectional signaling into neighboring cells. The signaling pathway downstream of the receptor is referred to as forward signaling while the signaling pathway downstream of the ephrin ligand is referred to as reverse signaling. The GPI-anchored ephrin-A EFNA2, EFNA3, and EFNA5 are able to activate EPHA8 through phosphorylation. With EFNA5 may regulate integrin-mediated cell adhesion and migration on fibronectin substrate but also neurite outgrowth. During development of the nervous system also plays a role in axon guidance. Downstream effectors of the EPHA8 signaling pathway include FYN which promotes cell adhesion upon activation by EPHA8 and the MAP kinases in the stimulation of neurite outgrowth. The sequence is that of Ephrin type-A receptor 8 (Epha8) from Rattus norvegicus (Rat).